The chain runs to 506 residues: Maturase K (506 aa).

Belongs to the intron maturase 2 family. MatK subfamily.

It is found in the plastid. The protein resides in the chloroplast. Usually encoded in the trnK tRNA gene intron. Probably assists in splicing its own and other chloroplast group II introns. The protein is Maturase K of Jasminum nudiflorum (Winter jasmine).